A 265-amino-acid chain; its full sequence is Zinc import ATP-binding protein ZnuC (265 aa).

Residues 6-221 enclose the ABC transporter domain; the sequence is IRLEQVAVTL…PAFVELFGKN (216 aa). Position 38–45 (38–45) interacts with ATP; it reads GPNGAGKT. The disordered stretch occupies residues 245 to 265; that stretch reads DAPATSSHTHTHVHGDHCKHG.

Belongs to the ABC transporter superfamily. Zinc importer (TC 3.A.1.15.5) family. In terms of assembly, the complex is composed of two ATP-binding proteins (ZnuC), two transmembrane proteins (ZnuB) and a solute-binding protein (ZnuA).

It is found in the cell inner membrane. It catalyses the reaction Zn(2+)(out) + ATP(in) + H2O(in) = Zn(2+)(in) + ADP(in) + phosphate(in) + H(+)(in). Its function is as follows. Part of the ABC transporter complex ZnuABC involved in zinc import. Responsible for energy coupling to the transport system. The sequence is that of Zinc import ATP-binding protein ZnuC from Pseudomonas savastanoi pv. phaseolicola (strain 1448A / Race 6) (Pseudomonas syringae pv. phaseolicola (strain 1448A / Race 6)).